A 232-amino-acid polypeptide reads, in one-letter code: Ubiquinone biosynthesis O-methyltransferase (232 aa).

S-adenosyl-L-methionine contacts are provided by R36, G55, D76, and M120.

Belongs to the methyltransferase superfamily. UbiG/COQ3 family.

It carries out the reaction a 3-demethylubiquinol + S-adenosyl-L-methionine = a ubiquinol + S-adenosyl-L-homocysteine + H(+). The catalysed reaction is a 3-(all-trans-polyprenyl)benzene-1,2-diol + S-adenosyl-L-methionine = a 2-methoxy-6-(all-trans-polyprenyl)phenol + S-adenosyl-L-homocysteine + H(+). It functions in the pathway cofactor biosynthesis; ubiquinone biosynthesis. Functionally, O-methyltransferase that catalyzes the 2 O-methylation steps in the ubiquinone biosynthetic pathway. The chain is Ubiquinone biosynthesis O-methyltransferase from Burkholderia orbicola (strain MC0-3).